The primary structure comprises 134 residues: Large ribosomal subunit protein uL16c (134 aa).

Residues 1 to 21 (MLSPKRTKYRKHHRGRMRGKA) are disordered.

This sequence belongs to the universal ribosomal protein uL16 family. As to quaternary structure, part of the 50S ribosomal subunit.

Its subcellular location is the plastid. It localises to the chloroplast. The protein is Large ribosomal subunit protein uL16c of Chlorella vulgaris (Green alga).